A 1468-amino-acid polypeptide reads, in one-letter code: Histone-lysine N-methyltransferase, H3 lysine-4 specific (1468 aa).

A compositionally biased stretch (polar residues) spans 1–11 (MPYSSQQNGYT). Disordered regions lie at residues 1-439 (MPYS…RSFG), 636-737 (EHKL…EEYD), 848-884 (SAPS…RKAI), 986-1103 (AGAH…TGEE), and 1141-1162 (PPEA…TDVP). Residues 12 to 26 (SASTSRLSEQTSSHS) are compositionally biased toward low complexity. Basic and acidic residues-rich tracts occupy residues 28–40 (SSRE…EKGR), 46–89 (EARH…DHWR), 99–109 (PRDDRRDEARN), 120–136 (PEHS…ESAH), 146–166 (LDSK…DSGR), and 174–215 (YEYD…RDDS). Residues 225-235 (RRSRSRSRSRS) are compositionally biased toward basic residues. 2 stretches are compositionally biased toward basic and acidic residues: residues 236 to 287 (RSRD…EHST) and 294 to 305 (EDSKDLRHESQR). Composition is skewed to polar residues over residues 306-315 (RVSASVQSAS) and 366-376 (SAPNGSATAPS). Residues 396–405 (PTREKAEEAR) show a composition bias toward basic and acidic residues. The segment covering 406 to 416 (TSSTRRPSSQT) has biased composition (low complexity). Residues 417-426 (NDNVNNSRDP) are compositionally biased toward polar residues. Low complexity-rich tracts occupy residues 650-662 (AAAS…PSTT) and 680-694 (PAAP…PASA). Residues 713-722 (SSYEESRKLA) show a composition bias toward basic and acidic residues. Over residues 849-861 (APSQHAPSQQIRT) the composition is skewed to polar residues. The span at 1012-1024 (KKKRGHTHRSKVH) shows a compositional bias: basic residues. Residues 1072 to 1085 (SDAEAGTDDVDSTE) are compositionally biased toward acidic residues. Residues 1086 to 1097 (TDALSRSVSASV) show a composition bias toward polar residues. The RxxxRR motif signature appears at 1293 to 1298 (RADSRR). The 118-residue stretch at 1327-1444 (KQLKFAKSPI…AGEELTYDYK (118 aa)) folds into the SET domain. Y1443 provides a ligand contact to S-adenosyl-L-methionine. One can recognise a Post-SET domain in the interval 1453 to 1468 (DAIPCLCGSPGCRRFL).

Belongs to the class V-like SAM-binding methyltransferase superfamily. In terms of assembly, component of the Set1C/COMPASS complex.

It is found in the nucleus. It localises to the chromosome. The catalysed reaction is L-lysyl(4)-[histone H3] + 3 S-adenosyl-L-methionine = N(6),N(6),N(6)-trimethyl-L-lysyl(4)-[histone H3] + 3 S-adenosyl-L-homocysteine + 3 H(+). It carries out the reaction N(6)-methyl-L-lysyl(4)-[histone H3] + S-adenosyl-L-methionine = N(6),N(6)-dimethyl-L-lysyl(4)-[histone H3] + S-adenosyl-L-homocysteine + H(+). The enzyme catalyses N(6),N(6)-dimethyl-L-lysyl(4)-[histone H3] + S-adenosyl-L-methionine = N(6),N(6),N(6)-trimethyl-L-lysyl(4)-[histone H3] + S-adenosyl-L-homocysteine + H(+). Its function is as follows. Catalytic component of the COMPASS (Set1C) complex that specifically mono-, di- and trimethylates histone H3 to form H3K4me1/2/3. Binds RNAs which might negatively affect its histone methyltransferase activity. COMPASS recognizes ubiquitinated H2B on one face of the nucleosome which stimulates the methylation of H3 on the opposing face. This is Histone-lysine N-methyltransferase, H3 lysine-4 specific (SET1) from Mycosarcoma maydis (Corn smut fungus).